The primary structure comprises 954 residues: Serine/threonine-protein kinase ste20 (954 aa).

Positions 1–17 are enriched in low complexity; the sequence is MDGQLSLLSPTSSSSTS. Disordered regions lie at residues 1–165 and 203–316; these read MDGQ…YDPL and AAPA…RKKS. Basic residues predominate over residues 18 to 28; sequence HSRKRLTKKQR. 3 stretches are compositionally biased toward polar residues: residues 33 to 42, 57 to 75, and 100 to 121; these read NHRTSSSFNV, SASS…SLAR, and RSHT…TIPT. 3 stretches are compositionally biased toward low complexity: residues 127-136, 143-153, and 203-214; these read SPASSSQPQT, SAVASTTVTSS, and AAPAPTSTTTIA. Residues 224 to 234 are compositionally biased toward pro residues; it reads VAPPPPPPPPA. 2 stretches are compositionally biased toward low complexity: residues 245–256 and 265–277; these read ARSSKPSKSPKS and ASSF…FSSA. The CRIB domain occupies 334–347; the sequence is ISAPENPVHVTHVG. Disordered regions lie at residues 440–562 and 587–655; these read PMIS…VQAS and QAMA…SNAI. Pro residues-rich tracts occupy residues 463-475 and 514-527; these read RAPP…PGPL and MPPP…PYLP. The region spanning 674–925 is the Protein kinase domain; that stretch reads YRGFTKIGQG…AHDLLRHDFM (252 aa). ATP is bound by residues 680–688 and Lys-703; that span reads IGQGASGGV. The active-site Proton acceptor is the Asp-793.

The protein belongs to the protein kinase superfamily. STE Ser/Thr protein kinase family. STE20 subfamily.

Its subcellular location is the cytoplasm. It localises to the nucleus. The catalysed reaction is L-seryl-[protein] + ATP = O-phospho-L-seryl-[protein] + ADP + H(+). It catalyses the reaction L-threonyl-[protein] + ATP = O-phospho-L-threonyl-[protein] + ADP + H(+). MAP4K component of the MAPK pathway required for the mating pheromone response and the regulation of cell polarity and cell cycle. Phosphorylates histone H2B to form H2BS10ph. This Neurospora crassa (strain ATCC 24698 / 74-OR23-1A / CBS 708.71 / DSM 1257 / FGSC 987) protein is Serine/threonine-protein kinase ste20 (stk-4).